Here is a 212-residue protein sequence, read N- to C-terminus: Adenylate kinase (212 aa).

10–15 is a binding site for ATP; the sequence is GSGKGT. The segment at 30–59 is NMP; sequence STGDLMRKEINDETPLGIECARYMNEGRLV. Residues T31, R36, 57–59, and Q90 each bind AMP; that span reads RLV. Positions 124 to 161 are LID; that stretch reads GRLICPKCKVSYHIISRKPKLEGICDNDGTELVRRPDD. R125 serves as a coordination point for ATP. Residues C128 and C131 each coordinate Zn(2+). Residue 134 to 135 coordinates ATP; the sequence is SY. Zn(2+) is bound by residues C148 and D151. Residues R158 and R169 each contribute to the AMP site. N198 is a binding site for ATP.

The protein belongs to the adenylate kinase family. In terms of assembly, monomer.

It localises to the cytoplasm. The catalysed reaction is AMP + ATP = 2 ADP. It participates in purine metabolism; AMP biosynthesis via salvage pathway; AMP from ADP: step 1/1. Functionally, catalyzes the reversible transfer of the terminal phosphate group between ATP and AMP. Plays an important role in cellular energy homeostasis and in adenine nucleotide metabolism. In Mesoplasma florum (strain ATCC 33453 / NBRC 100688 / NCTC 11704 / L1) (Acholeplasma florum), this protein is Adenylate kinase.